Consider the following 410-residue polypeptide: Lissencephaly-1 homolog (410 aa).

One can recognise a LisH domain in the interval 7–39 (QRDELNRAIADYLRSNGYEEAYSVFKKEAELDM). Residues 56–82 (TSVIRLQKKVMELESKLNEAKEEFTSG) are a coiled coil. WD repeat units lie at residues 106-147 (GHRS…RTLK), 148-189 (GHTD…RTMH), 190-229 (GHDH…CVKT), 232-271 (GHRE…CKAE), 274-333 (EHEH…CLMT), 336-377 (GHDN…KTLN), and 379-410 (HEHF…WECR).

The protein belongs to the WD repeat LIS1/nudF family. As to quaternary structure, can self-associate. Component of the cytosolic PAF-AH (I) heterotetrameric enzyme, which is composed of PAFAH1B1 (beta), PAFAH1B2 (alpha2) and PAFAH1B3 (alpha1) subunits. The catalytic activity of the enzyme resides in the alpha1 (PAFAH1B3) and alpha2 (PAFAH1B2) subunits, whereas the beta subunit (PAFAH1B1) has regulatory activity. Trimer formation is not essential for the catalytic activity. Interacts with dynein, dynactin, nde1 and ndel1.

Its subcellular location is the cytoplasm. The protein localises to the cytoskeleton. It localises to the microtubule organizing center. It is found in the centrosome. Its function is as follows. Regulatory subunit (beta subunit) of the cytosolic type I platelet-activating factor (PAF) acetylhydrolase (PAF-AH (I)), an enzyme that catalyzes the hydrolyze of the acetyl group at the sn-2 position of PAF and its analogs and participates in PAF inactivation. Regulates the PAF-AH (I) activity in a catalytic dimer composition-dependent manner. Positively regulates the activity of the minus-end directed microtubule motor protein dynein. May enhance dynein-mediated microtubule sliding by targeting dynein to the microtubule plus end. Required for several dynein- and microtubule-dependent processes such as the maintenance of Golgi integrity, the peripheral transport of microtubule fragments and the coupling of the nucleus and centrosome. May be required for proliferation of neuronal precursors and neuronal migration. This chain is Lissencephaly-1 homolog (pafah1b1), found in Xenopus laevis (African clawed frog).